A 351-amino-acid chain; its full sequence is Uroporphyrinogen decarboxylase (351 aa).

Substrate-binding positions include 25 to 29, Phe43, Asp74, Tyr151, Ser206, and His325; that span reads RQAGR.

Belongs to the uroporphyrinogen decarboxylase family. Homodimer.

It is found in the cytoplasm. The catalysed reaction is uroporphyrinogen III + 4 H(+) = coproporphyrinogen III + 4 CO2. It functions in the pathway porphyrin-containing compound metabolism; protoporphyrin-IX biosynthesis; coproporphyrinogen-III from 5-aminolevulinate: step 4/4. Functionally, catalyzes the decarboxylation of four acetate groups of uroporphyrinogen-III to yield coproporphyrinogen-III. In Chlorobaculum tepidum (strain ATCC 49652 / DSM 12025 / NBRC 103806 / TLS) (Chlorobium tepidum), this protein is Uroporphyrinogen decarboxylase.